The following is a 942-amino-acid chain: Calcium-activated chloride channel regulator 2 (942 aa).

The signal sequence occupies residues 1–32 (MTHRDSTGPVIGLKLVTLLFTLSPELLFLGAG). The Extracellular portion of the chain corresponds to 33-905 (LKLKENGYDG…SRDDLILKGV (873 aa)). A metalloprotease domain region spans residues 54 to 205 (DLKLITNIKE…CSSDITGVFV (152 aa)). Asn-74 and Asn-97 each carry an N-linked (GlcNAc...) asparagine glycan. His-164 serves as a coordination point for Zn(2+). Glu-165 is a catalytic residue. Residues His-168 and Asp-175 each contribute to the Zn(2+) site. Residues Asn-231, Asn-235, Asn-254, and Asn-286 are each glycosylated (N-linked (GlcNAc...) asparagine). Positions 311–483 (VVCLVIDVSR…NGMTEAFVRI (173 aa)) constitute a VWFA domain. N-linked (GlcNAc...) asparagine glycans are attached at residues Asn-522, Asn-580, Asn-637, and Asn-821. The chain crosses the membrane as a helical span at residues 906-926 (LTTVGLIAILCLIMVVAHCIF). Over 927–942 (NRKKRPSRKENETKFL) the chain is Cytoplasmic.

This sequence belongs to the CLCR family. Post-translationally, the translation product is autoproteolytically cleaved by the metalloprotease domain in the endoplasmic reticulum into a N-terminal and a C-terminal products that remain physically associated with each other. The cleavage is necessary for calcium-activated chloride channel (CaCC) activation activity. N-glycosylated. Highly expressed in eye, spleen, lung, kidney, uterus, and endothelial cells. Weakly expressed in heart and throughout the gastrointestinal tract. Highly expressed in mammary cell lines. Its expression in immortalized cell line HC11 correlates with slow or arrested growth. Re-expression in mammary tumor cells reduces colony survival.

Its subcellular location is the cell membrane. It is found in the basal cell membrane. It localises to the cell junction. In terms of biological role, plays a role in modulating chloride current across the plasma membrane in a calcium-dependent manner, and cell adhesion. Involved in basal cell adhesion and/or stratification of squamous epithelia. May act as a tumor suppressor in breast and colorectal cancer. Plays a key role for cell adhesion in the beginning stages of lung metastasis via the binding to ITGB4. In Mus musculus (Mouse), this protein is Calcium-activated chloride channel regulator 2 (Clca2).